The following is a 435-amino-acid chain: GTPase Der (435 aa).

2 EngA-type G domains span residues 8–169 and 176–351; these read NLVA…NFEN and FKIA…NNLS. Residues 14–21, 61–65, 123–126, 182–189, 229–233, and 294–297 contribute to the GTP site; these read GKPNVGKS, DTGGI, NKLD, GKPNAGKS, DTAGI, and NKWD. One can recognise a KH-like domain in the interval 352-435; the sequence is REIKQNLLND…PINLVLKKNK (84 aa).

Belongs to the TRAFAC class TrmE-Era-EngA-EngB-Septin-like GTPase superfamily. EngA (Der) GTPase family. In terms of assembly, associates with the 50S ribosomal subunit.

Its function is as follows. GTPase that plays an essential role in the late steps of ribosome biogenesis. The polypeptide is GTPase Der (Mycoplasmopsis pulmonis (strain UAB CTIP) (Mycoplasma pulmonis)).